Reading from the N-terminus, the 914-residue chain is TRPM8 channel-associated factor 3 (914 aa).

Positions 533–832 (NSWVSTGLYL…TYLQLQEGFG (300 aa)) constitute a Peptidase M60 domain.

The protein belongs to the TCAF family. As to expression, prostate-specific. Present in both dorso-lateral and anterior prostate.

Functionally, may play a role in the regulation of the cation channel TRPM8 activity. This Mus musculus (Mouse) protein is TRPM8 channel-associated factor 3.